The following is a 228-amino-acid chain: Probable septum site-determining protein MinC (228 aa).

It belongs to the MinC family. As to quaternary structure, interacts with MinD and FtsZ.

Cell division inhibitor that blocks the formation of polar Z ring septums. Rapidly oscillates between the poles of the cell to destabilize FtsZ filaments that have formed before they mature into polar Z rings. Prevents FtsZ polymerization. This is Probable septum site-determining protein MinC from Yersinia pseudotuberculosis serotype O:1b (strain IP 31758).